Consider the following 650-residue polypeptide: DNA mismatch repair protein MutL (650 aa).

Residues 374–420 (SSLPDTQRSQRQPEKAASGQRSSVDAGLSQGSSAHRASQTGLGQSGN) are disordered. Positions 392-420 (GQRSSVDAGLSQGSSAHRASQTGLGQSGN) are enriched in polar residues.

Belongs to the DNA mismatch repair MutL/HexB family.

This protein is involved in the repair of mismatches in DNA. It is required for dam-dependent methyl-directed DNA mismatch repair. May act as a 'molecular matchmaker', a protein that promotes the formation of a stable complex between two or more DNA-binding proteins in an ATP-dependent manner without itself being part of a final effector complex. This Shewanella amazonensis (strain ATCC BAA-1098 / SB2B) protein is DNA mismatch repair protein MutL.